Reading from the N-terminus, the 770-residue chain is MNTGDKAKSQAVPASGDIDQQALFFHRYPRPGKLEIQPTKPLGNQRDLALAYSPGVAAPCLAIKDNPETAADFTARANLVAVVSNGTAVLGLGNIGPLASKPVMEGKAVLFKKFAGIDVFDIEIDAPTVDRMVDVISALEPTFGGINLEDIKAPECFEVERRLREKMEIPVFHDDQHGTAIIVAAAVLNGLELAGKDIAEAKIVASGAGAAALACLNLLVTLGARRENIWVHDIEGLVYKGREALMDEWKAVYAQESDNRVLADSIGGADVFLGLSAAGVLKPELLARMAEKPLIMALANPTPEIMPEVARAARPDAMICTGRSDFPNQVNNVLCFPHIFRGALDCGARTINEEMKMAAVRAIAGLAREEPSDVAARAYSGETPVFGPDYLIPSPFDQRLILRIAPAVAKAAAESGVATRPIQDFDAYLDKLNRFVFRSGFIMKPVFAAAKNAAKNRVIFAEGEDERVLRAAQVLLEEGTAKPILIGRPQIIETRLRRYGLRIRPDVDFEVVNPEGDPRYRDYVDDYFALVGRLGVIPEAARTIVRTNTTVIGALAVKRGEADALICGVEGRYSRHLRDVSQIIGKRSGVLDFSALSLLISQRGATFFTDTYVSFSPSAEEIAQTTVMAANEIRRFGITPRAALVSHSNFGSRDSESAFKMRTALQLVRELAPDLEVDGEMHGDSAISEVLRQRVMPDSTLNGEANLLVFPNLDAANITLGVVKTMTDSLHVGPILLGSALPAHILSPSVTSRGVVNMAALAVVESSHPV.

Residues Met-1–Gly-440 form a malic enzyme region. The active-site Proton acceptor is the Lys-107. The a divalent metal cation site is built by Glu-149 and Asp-150. Asp-175 and Asn-300 together coordinate NAD(+). Residues Phe-441–Val-770 form a phosphate acetyltransferase region.

The protein in the N-terminal section; belongs to the malic enzymes family. In the C-terminal section; belongs to the phosphate acetyltransferase and butyryltransferase family. As to quaternary structure, homooctamer. It depends on Mg(2+) as a cofactor. Mn(2+) is required as a cofactor.

The catalysed reaction is (S)-malate + NAD(+) = pyruvate + CO2 + NADH. With respect to regulation, subject to substrate inhibition and shows allosteric regulation by acetyl-CoA. Its function is as follows. Required for symbiotic nitrogen fixation. Plays a key role in the conversion of malate to acetyl-CoA for efficient tricarboxylic acid cycle function in nitrogen-fixating bacteria. This Rhizobium meliloti (strain 1021) (Ensifer meliloti) protein is NAD-dependent malic enzyme (dme).